Reading from the N-terminus, the 890-residue chain is Alanine--tRNA ligase (890 aa).

Zn(2+) contacts are provided by His568, His572, Cys680, and His684.

Belongs to the class-II aminoacyl-tRNA synthetase family. The cofactor is Zn(2+).

Its subcellular location is the cytoplasm. The catalysed reaction is tRNA(Ala) + L-alanine + ATP = L-alanyl-tRNA(Ala) + AMP + diphosphate. Functionally, catalyzes the attachment of alanine to tRNA(Ala) in a two-step reaction: alanine is first activated by ATP to form Ala-AMP and then transferred to the acceptor end of tRNA(Ala). Also edits incorrectly charged Ser-tRNA(Ala) and Gly-tRNA(Ala) via its editing domain. The protein is Alanine--tRNA ligase of Psychrobacter cryohalolentis (strain ATCC BAA-1226 / DSM 17306 / VKM B-2378 / K5).